A 133-amino-acid chain; its full sequence is Small ribosomal subunit protein uS8 (133 aa).

Belongs to the universal ribosomal protein uS8 family. As to quaternary structure, part of the 30S ribosomal subunit.

One of the primary rRNA binding proteins, it binds directly to 16S rRNA central domain where it helps coordinate assembly of the platform of the 30S subunit. The sequence is that of Small ribosomal subunit protein uS8 from Ignicoccus hospitalis (strain KIN4/I / DSM 18386 / JCM 14125).